A 182-amino-acid chain; its full sequence is T-cell surface glycoprotein CD3 gamma chain (182 aa).

The signal sequence occupies residues 1-22 (MEQGKHLAGLILAITLLQGTMA). The 76-residue stretch at 23–98 (QLKEGKHSVL…GSKENSKRLQ (76 aa)) folds into the Ig-like domain. Residues 23–116 (QLKEGKHSVL…CIELNSATVS (94 aa)) are Extracellular-facing. Cys-46 and Cys-87 are oxidised to a cystine. Asn-66 is a glycosylation site (N-linked (GlcNAc...) asparagine). A helical transmembrane segment spans residues 117–137 (GFIFTEIISLFFLAVGVYFIA). Residues 138–182 (GQDGVRQSRASDKQTLLSNDQLYQPLKDREDDQYSHLQGNNSRKN) are Cytoplasmic-facing. Ser-145 is subject to Phosphoserine. Ser-148 carries the phosphoserine; by PKC modification. The region spanning 149–177 (DKQTLLSNDQLYQPLKDREDDQYSHLQGN) is the ITAM domain. The Di-leucine motif motif lies at 153–154 (LL).

In terms of assembly, the TCR-CD3 complex is composed of a CD3D/CD3E and a CD3G/CD3E heterodimers that preferentially associate with TCRalpha and TCRbeta, respectively, to form TCRalpha/CD3E/CD3G and TCRbeta/CD3G/CD3E trimers. In turn, the hexamer interacts with CD3Z homodimer to form the TCR-CD3 complex. Alternatively, TCRalpha and TCRbeta can be replaced by TCRgamma and TCRdelta. Post-translationally, phosphorylated on Tyr residues after T-cell receptor triggering by LCK in association with CD4/CD8. Phosphorylated also by PKC; leading to the TCR complex down-regulation. In terms of processing, phosphorylated on Tyr residues after T-cell receptor triggering by LCK in association with CD4/CD8.

It localises to the cell membrane. Functionally, part of the TCR-CD3 complex present on T-lymphocyte cell surface that plays an essential role in adaptive immune response. When antigen presenting cells (APCs) activate T-cell receptor (TCR), TCR-mediated signals are transmitted across the cell membrane by the CD3 chains CD3D, CD3E, CD3G and CD3Z. All CD3 chains contain immunoreceptor tyrosine-based activation motifs (ITAMs) in their cytoplasmic domain. Upon TCR engagement, these motifs become phosphorylated by Src family protein tyrosine kinases LCK and FYN, resulting in the activation of downstream signaling pathways. In addition to this role of signal transduction in T-cell activation, CD3G plays an essential role in the dynamic regulation of TCR expression at the cell surface. Indeed, constitutive TCR cycling is dependent on the di-leucine-based (diL) receptor-sorting motif present in CD3G. This is T-cell surface glycoprotein CD3 gamma chain (CD3G) from Sus scrofa (Pig).